Consider the following 421-residue polypeptide: Synaptotagmin-12 (421 aa).

The Vesicular portion of the chain corresponds to 1–18; that stretch reads MAVDVTEYHLSVIKSPPG. The chain crosses the membrane as a helical span at residues 19 to 39; that stretch reads WEVGVYAAGALALLGIAAVSL. Topologically, residues 40 to 421 are cytoplasmic; that stretch reads WKLWTSGSFP…VSMWHPVRRN (382 aa). The residue at position 97 (Ser-97) is a Phosphoserine; by PKA. Phosphoserine is present on residues Ser-99 and Ser-214. 2 consecutive C2 domains span residues 152-272 and 283-416; these read TLGQ…SGWL and AVGE…SMWH.

The protein belongs to the synaptotagmin family. Homodimer. Can also form heterodimers. Interacts with SYT1. In terms of processing, phosphorylation of Ser-97 is required for mossy-fiber long-term potentiation. As to expression, expressed in the brain, specifically in neurons of the cerebellum, cortex, hippocampus, olfactory bulb, brainstem and spinal cord (at protein level).

The protein resides in the cytoplasmic vesicle. It localises to the secretory vesicle. It is found in the synaptic vesicle membrane. In terms of biological role, synaptic vesicle phosphoprotein that enhances spontaneous neurotransmitter release but does not effect induced neurotransmitter release. Unlike other synaptotagmins, it does not bind Ca(2+) or phospholipids. Essential for mossy-fiber long-term potentiation in the hippocampus. This is Synaptotagmin-12 from Rattus norvegicus (Rat).